The chain runs to 449 residues: Phosphoglucosamine mutase (449 aa).

The Phosphoserine intermediate role is filled by Ser-100. The Mg(2+) site is built by Ser-100, Asp-241, Asp-243, and Asp-245. Phosphoserine is present on Ser-100.

The protein belongs to the phosphohexose mutase family. Requires Mg(2+) as cofactor. In terms of processing, activated by phosphorylation.

It carries out the reaction alpha-D-glucosamine 1-phosphate = D-glucosamine 6-phosphate. Catalyzes the conversion of glucosamine-6-phosphate to glucosamine-1-phosphate. The polypeptide is Phosphoglucosamine mutase (Geobacillus kaustophilus (strain HTA426)).